A 593-amino-acid chain; its full sequence is Tyrosine-protein phosphatase non-receptor type 9 (593 aa).

Residue methionine 1 is modified to N-acetylmethionine. Positions 1-20 are disordered; it reads MEPATAPRPDMAPELTPEEE. The CRAL-TRIO domain maps to 84-243; the sequence is EEPLRSEILS…NLGGYVKIDL (160 aa). The Tyrosine-protein phosphatase domain occupies 303–574; it reads IYEEYEDIRR…YFCYKAILEF (272 aa). Cysteine 515 serves as the catalytic Phosphocysteine intermediate.

The protein belongs to the protein-tyrosine phosphatase family. Non-receptor class 3 subfamily.

The protein localises to the cytoplasm. The enzyme catalyses O-phospho-L-tyrosyl-[protein] + H2O = L-tyrosyl-[protein] + phosphate. Functionally, protein-tyrosine phosphatase that could participate in the transfer of hydrophobic ligands or in functions of the Golgi apparatus. This is Tyrosine-protein phosphatase non-receptor type 9 (Ptpn9) from Mus musculus (Mouse).